Here is a 326-residue protein sequence, read N- to C-terminus: MTGSSSQFQQLEKLGEGTYATVYKGRNRATGALVALKEISLDSEEGTPSTAIREISLMKELDHENIVTLYDVIHTENKLTLVFEYMDKDLKKYMEVHGQQSALDLKVVKSFMFQLLKGIMFCHDNRVLHRDLKPQNLLINNKGELKLGDFGLARAFGIPFNTFSNEVVTLWYRAPDVLLGSRAYTTSIDIWSAGCIFAEMCTGKPLFPGTANEDQLIKIFRLMGTPNERTWPGISQYTNYKNNWQIFVPQDLRLIVPNLDSMGLNLLQSLLQMRPESRITARQALQHPWFHEITMPNAVPQHLSDPYQQQQQQQQHPHQPIIDQQY.

The 283-residue stretch at 8–290 folds into the Protein kinase domain; sequence FQQLEKLGEG…ARQALQHPWF (283 aa). ATP-binding positions include 14–22 and Lys-37; that span reads LGEGTYATV. Asp-131 functions as the Proton acceptor in the catalytic mechanism. The segment at 300-326 is disordered; the sequence is PQHLSDPYQQQQQQQQHPHQPIIDQQY. A compositionally biased stretch (low complexity) spans 305-326; sequence DPYQQQQQQQQHPHQPIIDQQY.

It belongs to the protein kinase superfamily. CMGC Ser/Thr protein kinase family. CDC2/CDKX subfamily. In terms of assembly, interacts with a number of cyclins.

It carries out the reaction L-seryl-[protein] + ATP = O-phospho-L-seryl-[protein] + ADP + H(+). The enzyme catalyses L-threonyl-[protein] + ATP = O-phospho-L-threonyl-[protein] + ADP + H(+). Its function is as follows. When phosphate concentrations are high it phosphorylates the PHO4 transcription factor thus establishing repression. This is Negative regulator of the PHO system (PHO85) from Candida albicans (Yeast).